Here is a 238-residue protein sequence, read N- to C-terminus: Endonuclease V (238 aa).

2 residues coordinate Mg(2+): D46 and D116.

Belongs to the endonuclease V family. Mg(2+) serves as cofactor.

The protein resides in the cytoplasm. The catalysed reaction is Endonucleolytic cleavage at apurinic or apyrimidinic sites to products with a 5'-phosphate.. In terms of biological role, DNA repair enzyme involved in the repair of deaminated bases. Selectively cleaves double-stranded DNA at the second phosphodiester bond 3' to a deoxyinosine leaving behind the intact lesion on the nicked DNA. This Bacillus velezensis (strain DSM 23117 / BGSC 10A6 / LMG 26770 / FZB42) (Bacillus amyloliquefaciens subsp. plantarum) protein is Endonuclease V.